Here is a 295-residue protein sequence, read N- to C-terminus: NADPH-dependent reductive aminase (295 aa).

The first 18 residues, 1 to 18, serve as a signal peptide directing secretion; it reads MSKHIGIFGLGAMGTALA. NADP(+) is bound at residue 6-20; sequence GIFGLGAMGTALAAK.

It belongs to the HIBADH-related family. As to quaternary structure, homodimer. The cofactor is NADPH.

In terms of biological role, NADPH-dependent reductive aminase that catalyzes the reductive coupling of a broad set of carbonyl compounds with a variety of primary and secondary amines. Possesses remarkably high activity for the reductive amination of ketones and amines, often with high stereoselectivity and in some cases with ketone:amine ratios as low as 1:1. The cofactor NADPH, the carbonyl compound and the amine are added to the enzyme in that sequence, followed by the release of product, NADP(+) being released at last. RedAm is also able to act in the reverse, oxidative direction and exhibits activity in the dehydrogenation of amines to yield imines. The highest activity is found for 1-methyl-tetrahydroquinoline and acyclic amines are also found to be transformed. In Aspergillus oryzae (strain ATCC 42149 / RIB 40) (Yellow koji mold), this protein is NADPH-dependent reductive aminase.